We begin with the raw amino-acid sequence, 216 residues long: Pyrophosphatase PpaX (216 aa).

Residue Asp-9 is the Nucleophile of the active site.

It belongs to the HAD-like hydrolase superfamily. PpaX family. Requires Mg(2+) as cofactor.

It carries out the reaction diphosphate + H2O = 2 phosphate + H(+). In terms of biological role, hydrolyzes pyrophosphate formed during P-Ser-HPr dephosphorylation by HPrK/P. Might play a role in controlling the intracellular pyrophosphate pool. In Bacillus cereus (strain AH820), this protein is Pyrophosphatase PpaX.